Reading from the N-terminus, the 274-residue chain is Rhamnulose-1-phosphate aldolase (274 aa).

Glu117 is a catalytic residue. 3 residues coordinate Zn(2+): His141, His143, and His212.

The protein belongs to the aldolase class II family. RhaD subfamily. As to quaternary structure, homotetramer. It depends on Zn(2+) as a cofactor.

It localises to the cytoplasm. It carries out the reaction L-rhamnulose 1-phosphate = (S)-lactaldehyde + dihydroxyacetone phosphate. Its pathway is carbohydrate degradation; L-rhamnose degradation; glycerone phosphate from L-rhamnose: step 3/3. Its function is as follows. Catalyzes the reversible cleavage of L-rhamnulose-1-phosphate to dihydroxyacetone phosphate (DHAP) and L-lactaldehyde. The polypeptide is Rhamnulose-1-phosphate aldolase (Escherichia coli (strain SE11)).